We begin with the raw amino-acid sequence, 527 residues long: METNTVQKLTDILGATKVYHNLPVANLVEMAVKRGEGILTDKGALNALTGKFTGRSPKDKFVVDEASVHDKINWGPVNQPISTEKFQALQQDVLQYLQSKDELFVFDGFAGADTTYRLPIRVVNEFAWHNLFARQLFIRPSEEELAAHESEFTVIYAPNFKANPAVHGTNSETFIVLSFEQKTVLIGGTEYAGEMKKSIFSVMNMLLPERNVLPMHCSANVGKDGDVALFFGLSGTGKTTLSADPDRFLIGDDEHGWSDNGVFNIEGGCYAKCVKLSEEGEPQIWKAIQFGTVLENVDVNEATRVADYDSTKYTENTRAAYPVEAIPGAVIPGVGGQPNVIVFLTADSFGVLPPISKLNKEQAMYHFLSGYTSKMAGTERGVTAPQTEFSTCFGSPFLPLHPVVYAEMLGKKIDERKVQVYLVNTGWTGGPVGVGQRMKLSYTRAMVTAALNGELEKVDYVADEIFGVQVPTSCPNVPAEVLQPRNTWANKEDYDKQAADLAARFIENFEKKFPNAADIANAGPKVK.

Positions 55, 191, and 197 each coordinate substrate. ATP contacts are provided by residues K197, H216, and 232–240 (GLSGTGKTT). Positions 197 and 216 each coordinate Mn(2+). D253 contacts Mn(2+). The ATP site is built by E281, R318, and T443. R318 is a binding site for substrate.

This sequence belongs to the phosphoenolpyruvate carboxykinase (ATP) family. Requires Mn(2+) as cofactor.

It localises to the cytoplasm. The catalysed reaction is oxaloacetate + ATP = phosphoenolpyruvate + ADP + CO2. Its pathway is carbohydrate biosynthesis; gluconeogenesis. Involved in the gluconeogenesis. Catalyzes the conversion of oxaloacetate (OAA) to phosphoenolpyruvate (PEP) through direct phosphoryl transfer between the nucleoside triphosphate and OAA. The polypeptide is Phosphoenolpyruvate carboxykinase (ATP) (Brevibacillus brevis (strain 47 / JCM 6285 / NBRC 100599)).